Here is a 220-residue protein sequence, read N- to C-terminus: Fructose-6-phosphate aldolase (220 aa).

Lysine 85 functions as the Schiff-base intermediate with substrate in the catalytic mechanism.

This sequence belongs to the transaldolase family. Type 3A subfamily. In terms of assembly, homodecamer.

The protein localises to the cytoplasm. The enzyme catalyses beta-D-fructose 6-phosphate = dihydroxyacetone + D-glyceraldehyde 3-phosphate. In terms of biological role, catalyzes the reversible formation of fructose 6-phosphate from dihydroxyacetone and D-glyceraldehyde 3-phosphate via an aldolization reaction. The sequence is that of Fructose-6-phosphate aldolase from Salmonella agona (strain SL483).